The chain runs to 523 residues: Putative pentatricopeptide repeat-containing protein At3g15200 (523 aa).

PPR repeat units follow at residues 142-172 (SSML…MSKR), 177-211 (NEKT…GIDD), 212-242 (DLVA…RRRE), 246-280 (DIKA…KCRP), 281-315 (DVVS…RRNP), 316-350 (DVKI…GPDP), 351-385 (NVVT…GGSC), 388-418 (NDVT…NKCE), 420-454 (TSDL…GLGP), and 455-489 (DQRT…GMVP). Residues 497 to 523 (LNQNKTKPRVEDKMLRSNLTSEESESD) are disordered.

The protein belongs to the PPR family. P subfamily.

The polypeptide is Putative pentatricopeptide repeat-containing protein At3g15200 (Arabidopsis thaliana (Mouse-ear cress)).